The following is a 119-amino-acid chain: Large ribosomal subunit protein bL19 (119 aa).

It belongs to the bacterial ribosomal protein bL19 family.

Functionally, this protein is located at the 30S-50S ribosomal subunit interface and may play a role in the structure and function of the aminoacyl-tRNA binding site. The polypeptide is Large ribosomal subunit protein bL19 (Sulfurovum sp. (strain NBC37-1)).